A 208-amino-acid polypeptide reads, in one-letter code: Uridine kinase (208 aa).

Residue 11 to 18 (GGTGSGKS) coordinates ATP.

Belongs to the uridine kinase family.

The protein localises to the cytoplasm. It catalyses the reaction uridine + ATP = UMP + ADP + H(+). It carries out the reaction cytidine + ATP = CMP + ADP + H(+). It functions in the pathway pyrimidine metabolism; CTP biosynthesis via salvage pathway; CTP from cytidine: step 1/3. The protein operates within pyrimidine metabolism; UMP biosynthesis via salvage pathway; UMP from uridine: step 1/1. The protein is Uridine kinase of Clostridium perfringens (strain ATCC 13124 / DSM 756 / JCM 1290 / NCIMB 6125 / NCTC 8237 / Type A).